The sequence spans 31 residues: Cytochrome b6-f complex subunit 6 (31 aa).

The chain crosses the membrane as a helical span at residues 4–24 (ITSYFGFLLAALTITSALFIG).

The protein belongs to the PetL family. The 4 large subunits of the cytochrome b6-f complex are cytochrome b6, subunit IV (17 kDa polypeptide, PetD), cytochrome f and the Rieske protein, while the 4 small subunits are PetG, PetL, PetM and PetN. The complex functions as a dimer.

It localises to the plastid. Its subcellular location is the chloroplast thylakoid membrane. Functionally, component of the cytochrome b6-f complex, which mediates electron transfer between photosystem II (PSII) and photosystem I (PSI), cyclic electron flow around PSI, and state transitions. PetL is important for photoautotrophic growth as well as for electron transfer efficiency and stability of the cytochrome b6-f complex. This chain is Cytochrome b6-f complex subunit 6, found in Coffea arabica (Arabian coffee).